We begin with the raw amino-acid sequence, 288 residues long: Programmed cell death protein 1 (288 aa).

The first 24 residues, Met-1–Phe-24, serve as a signal peptide directing secretion. A nivolumab binding region spans residues Leu-25 to Pro-34. Residues Leu-25–Val-170 are Extracellular-facing. Residues Pro-35 to Thr-145 form the Ig-like V-type domain. 4 N-linked (GlcNAc...) asparagine glycosylation sites follow: Asn-49, Asn-58, Asn-74, and Asn-116. Cys-54 and Cys-123 form a disulfide bridge. The interval Met-70–Asp-77 is interaction with CD274/PDCD1L1. Residues Asn-74–Gln-99 form a pembrolizumab binding region. Residues Val-171–Ile-191 form a helical membrane-spanning segment. Topologically, residues Cys-192 to Leu-288 are cytoplasmic. The ITIM motif motif lies at Val-221–Leu-226. Tyr-223 is subject to Phosphotyrosine. Lys-233 participates in a covalent cross-link: Glycyl lysine isopeptide (Lys-Gly) (interchain with G-Cter in ubiquitin). Thr-234 carries the post-translational modification Phosphothreonine; by MAPK3. The ITSM motif motif lies at Glu-247–Ile-251. Tyr-248 is modified (phosphotyrosine). The tract at residues Pro-254–Leu-288 is disordered. Basic and acidic residues predominate over residues Arg-278–Leu-288.

As to quaternary structure, monomer. Interacts with CD274/PDCD1L1. Interacts with CD273/PDCD1LG2. Interacts with FBXO38; leading to ubiquitination and degradation of PDCD1 by the proteasome. Ubiquitinated at Lys-233 by the SCF(FBXO38) complex, leading to its proteasomal degradation. Ubiquitinated via 'Lys-48'-linked polyubiquitin chains. Deubiquitinated and thus stabilized by USP5. In terms of processing, tyrosine phosphorylated at Tyr-223 (within ITIM motif) and Tyr-248 (ITSM motif) upon ligand binding. Phosphorylation at Tyr-248 promotes the recruitment of the protein tyrosine phosphatase PTPN11/SHP-2 that mediates dephosphorylation of key TCR proximal signaling molecules, such as ZAP70, PRKCQ/PKCtheta and CD247/CD3zeta. Phosphorylation at Thr-234 promotes the recruitment of the deubiquitinase USP5. Post-translationally, N-glycosylation at Asn-58 contains at least two N-acetylglucosamine units and one fucose. N-glycosylation does not affect binding to nivolumab drug.

The protein localises to the cell membrane. Inhibited by pembrolizumab (also named MK-3475 or lambrolizumab), a monoclonal antibody that prevents the interaction with CD274/PDCD1L1. Inhibited by nivolumab (also named ONO-4538, BMS-936558 or Opdivo), a monoclonal antibody that prevents the interaction with CD274/PDCD1L1. The interaction with nivolumab is not dependent on glycosylation and depends on a loop at the N-terminus (N-terminal loop, corresponding to residues 25-34). Targeting the interaction between PDCD1 and CD274/PDCD1L1 with pembrolizumab and nivolumab antibodies has demonstrated great promise as a strategy for controlling and eradicating cancer. Pembrolizumab and nivolumab are used for treatment of patients with advanced melanoma. These antibodies are also effective against other cancers, such as non-small cell lung cancer, renal cell carcinoma, bladder cancer and Hodgkin's lymphoma. Its function is as follows. Inhibitory receptor on antigen activated T-cells that plays a critical role in induction and maintenance of immune tolerance to self. Delivers inhibitory signals upon binding to ligands CD274/PDCD1L1 and CD273/PDCD1LG2. Following T-cell receptor (TCR) engagement, PDCD1 associates with CD3-TCR in the immunological synapse and directly inhibits T-cell activation. Suppresses T-cell activation through the recruitment of PTPN11/SHP-2: following ligand-binding, PDCD1 is phosphorylated within the ITSM motif, leading to the recruitment of the protein tyrosine phosphatase PTPN11/SHP-2 that mediates dephosphorylation of key TCR proximal signaling molecules, such as ZAP70, PRKCQ/PKCtheta and CD247/CD3zeta. Functionally, the PDCD1-mediated inhibitory pathway is exploited by tumors to attenuate anti-tumor immunity and escape destruction by the immune system, thereby facilitating tumor survival. The interaction with CD274/PDCD1L1 inhibits cytotoxic T lymphocytes (CTLs) effector function. The blockage of the PDCD1-mediated pathway results in the reversal of the exhausted T-cell phenotype and the normalization of the anti-tumor response, providing a rationale for cancer immunotherapy. The sequence is that of Programmed cell death protein 1 from Homo sapiens (Human).